The chain runs to 512 residues: ETS translocation variant 3 (512 aa).

A DNA-binding region (ETS) is located at residues I35–N116. The tract at residues Q138–D196 is disordered. A phosphoserine mark is found at S139, S159, and S315. Residues H158–G184 show a composition bias toward polar residues. The interval Q341–A512 is disordered. Residues I380–E406 show a composition bias toward basic and acidic residues. A Glycyl lysine isopeptide (Lys-Gly) (interchain with G-Cter in SUMO2) cross-link involves residue K381. K388 is subject to N6-acetyllysine; alternate. Residue K388 forms a Glycyl lysine isopeptide (Lys-Gly) (interchain with G-Cter in SUMO2); alternate linkage. A compositionally biased stretch (acidic residues) spans E443 to E452. Composition is skewed to basic and acidic residues over residues D453–A468 and R479–K491.

This sequence belongs to the ETS family.

It localises to the nucleus. Functionally, transcriptional repressor that contribute to growth arrest during terminal macrophage differentiation by repressing target genes involved in Ras-dependent proliferation. Represses MMP1 promoter activity. This chain is ETS translocation variant 3 (ETV3), found in Ateles geoffroyi (Black-handed spider monkey).